Reading from the N-terminus, the 284-residue chain is RNA polymerase sigma factor RpoH (284 aa).

Residues 53 to 122 (LILSHLRFVI…IHEYVLRNWR (70 aa)) are sigma-70 factor domain-2. Residues 77-80 (DLIQ) carry the Interaction with polymerase core subunit RpoC motif. The interval 228 to 280 (ALLRLDERSRHIIHARWLDKNKKNTLQNIANNYGISAERVRQLEKNAMKKLKL) is sigma-70 factor domain-4. A DNA-binding region (H-T-H motif) is located at residues 253 to 272 (LQNIANNYGISAERVRQLEK).

Belongs to the sigma-70 factor family. RpoH subfamily. As to quaternary structure, interacts with the RNA polymerase core enzyme.

It is found in the cytoplasm. Functionally, sigma factors are initiation factors that promote the attachment of RNA polymerase to specific initiation sites and are then released. This sigma factor is involved in regulation of expression of heat shock genes. This is RNA polymerase sigma factor RpoH from Buchnera aphidicola subsp. Acyrthosiphon pisum (strain APS) (Acyrthosiphon pisum symbiotic bacterium).